The sequence spans 351 residues: Trans-enoyl reductase grgB (351 aa).

Residues 10 to 346 (GAESGGYRLA…GKVHAKKLVV (337 aa)) enclose the Enoyl reductase (ER) domain. NADP(+)-binding positions include 161–164 (ATAT), 184–187 (SPAN), Tyr-202, 249–250 (LE), and 339–340 (VH).

The protein belongs to the zinc-containing alcohol dehydrogenase family.

The protein operates within secondary metabolite biosynthesis. Its function is as follows. Trans-enoyl reductase; part of the gene cluster that mediates the biosynthesis of gregatin A, a fungal polyketide featuring an alkylated furanone core. The PKS grgA synthesizes C11 and C4 polyketide chains in the presence and absence of the trans-enoyl reductase grgB, respectively. The polyketide transferase grgF is then responsible for the fusion of the two carbon chains to produce the furanone skeleton of gregatin A. Next, the cytochrome P450 monooxygenase grgG accepts performs the oxidative cyclization to furnish the gregatin scaffold and leads to the formation of desmethylgregatin A. Finally, the O-methyltransferase grgD methylates the carboxyl group of desmethylgregatin A to provide gregatin A. The chain is Trans-enoyl reductase grgB from Penicillium sp.